The primary structure comprises 95 residues: Aspartyl/glutamyl-tRNA(Asn/Gln) amidotransferase subunit C (95 aa).

Belongs to the GatC family. Heterotrimer of A, B and C subunits.

It carries out the reaction L-glutamyl-tRNA(Gln) + L-glutamine + ATP + H2O = L-glutaminyl-tRNA(Gln) + L-glutamate + ADP + phosphate + H(+). It catalyses the reaction L-aspartyl-tRNA(Asn) + L-glutamine + ATP + H2O = L-asparaginyl-tRNA(Asn) + L-glutamate + ADP + phosphate + 2 H(+). Allows the formation of correctly charged Asn-tRNA(Asn) or Gln-tRNA(Gln) through the transamidation of misacylated Asp-tRNA(Asn) or Glu-tRNA(Gln) in organisms which lack either or both of asparaginyl-tRNA or glutaminyl-tRNA synthetases. The reaction takes place in the presence of glutamine and ATP through an activated phospho-Asp-tRNA(Asn) or phospho-Glu-tRNA(Gln). The sequence is that of Aspartyl/glutamyl-tRNA(Asn/Gln) amidotransferase subunit C from Citrifermentans bemidjiense (strain ATCC BAA-1014 / DSM 16622 / JCM 12645 / Bem) (Geobacter bemidjiensis).